The chain runs to 394 residues: Elongation factor Tu (394 aa).

The 195-residue stretch at 10–204 (KPHLNVGTIG…ALDTYIPLPE (195 aa)) folds into the tr-type G domain. Positions 19–26 (GHVDHGKT) are G1. 19-26 (GHVDHGKT) lines the GTP pocket. T26 lines the Mg(2+) pocket. Residues 60–64 (GITIN) are G2. The segment at 81 to 84 (DCPG) is G3. GTP-binding positions include 81-85 (DCPGH) and 136-139 (NKCD). A G4 region spans residues 136 to 139 (NKCD). Residues 174–176 (SAL) form a G5 region.

The protein belongs to the TRAFAC class translation factor GTPase superfamily. Classic translation factor GTPase family. EF-Tu/EF-1A subfamily. In terms of assembly, monomer.

It is found in the cytoplasm. It carries out the reaction GTP + H2O = GDP + phosphate + H(+). In terms of biological role, GTP hydrolase that promotes the GTP-dependent binding of aminoacyl-tRNA to the A-site of ribosomes during protein biosynthesis. The sequence is that of Elongation factor Tu from Psychromonas ingrahamii (strain DSM 17664 / CCUG 51855 / 37).